Consider the following 539-residue polypeptide: F-box only protein 31 (539 aa).

Residues 11–53 (GPSRGCRRRQQRRGPAETAAADSEPDTDPEEERIEASAGVGGG) are disordered. At Ser33 the chain carries Phosphoserine. A Phosphoserine; by PKB/AKT1 modification is found at Ser33. The span at 33–43 (SEPDTDPEEER) shows a compositional bias: acidic residues. Thr37 is modified (phosphothreonine). The D box motif lies at 64 to 69 (RCSLLE). In terms of domain architecture, F-box spans 64-110 (RCSLLELPPELLVEIFASLPGTDLPSLAQVCTKFRRILHTDTIWRRR). Residues Cys206, His214, Cys230, and His236 each coordinate Zn(2+). Ser278 carries the post-translational modification Phosphoserine; by ATM. Positions 297–299 (DDL) match the DDL motif motif. Residues 377–397 (VRQEQQEGGHEAGEGRGRQGP) are compositionally biased toward basic and acidic residues. The segment at 377–446 (VRQEQQEGGH…PAQCGQGQPF (70 aa)) is disordered. Residue Thr419 is modified to Phosphothreonine; by MTOR. Residue Ser480 is modified to Phosphoserine.

Belongs to the FBXO31 family. In terms of assembly, part of a SCF (SKP1-cullin-F-box) protein ligase complex SCF(FBXO31) composed of CUL1, SKP1, RBX1 and FBXO31. Interacts (when phosphorylated at Ser-33) with CDC20, promoting ubiquitination by the APC/C complex. Phosphorylation at Ser-278 by ATM following gamma-irradiation results in its stabilization. Phosphorylation at Thr-419 and Ser-480 in absence of stress promotes its ubiquitination and degradation by the SCF(FBXO46) complex. Phosphorylation at Ser-33 by AKT1 promotes association with CDC20 and ubiquitination by the APC/C complex. Post-translationally, ubiquitinated by the SCF(FBXO46) complex in absence of stress, promoting its degradation. Ubiquitinated by the APC/C complex following phosphorylation at Ser-33, leading to its degradation by the proteasome. In terms of tissue distribution, highly expressed in brain. Expressed at moderate levels in most tissues, except bone marrow.

It localises to the cytoplasm. It is found in the cytoskeleton. Its subcellular location is the microtubule organizing center. The protein localises to the centrosome. It participates in protein modification; protein ubiquitination. Substrate-recognition component of the SCF(FBXO31) protein ligase complex, which specifically mediates the ubiquitination of proteins amidated at their C-terminus in response to oxidative stress, leading to their degradation by the proteasome. FBXO31 specifically recognizes and binds C-terminal peptides bearing an amide: C-terminal amidation in response to oxidative stress takes place following protein fragmentation. The SCF(FBXO31) also plays a role in G1 arrest following DNA damage by mediating ubiquitination of phosphorylated cyclin-D1 (CCND1), promoting its degradation by the proteasome, resulting in G1 arrest. The SCF(FBXO31) complex is however not a major regulator of CCND1 stability during the G1/S transition. In response to genotoxic stress, the SCF(FBXO31) complex directs ubiquitination and degradation of phosphorylated MDM2, thereby promoting p53/TP53-mediated DNA damage response. SCF(FBXO31) complex is required for genomic integrity by catalyzing ubiquitination and degradation of cyclin-A (CCNA1 and/or CCNA2) during the G1 phase. In response to genotoxic stress, the SCF(FBXO31) complex directs ubiquitination and degradation of phosphorylated FBXO46 and MAP2K6. SCF(FBXO31) complex promotes ubiquitination and degradation of CDT1 during the G2 phase to prevent re-replication. The SCF(FBXO31) complex also mediates ubiquitination and degradation of DUSP6, OGT and PARD6A. This chain is F-box only protein 31, found in Homo sapiens (Human).